The sequence spans 418 residues: Zinc finger protein 566 (418 aa).

One can recognise a KRAB domain in the interval 6–77 (VMFSDVSVDF…DRELTRGQWP (72 aa)). The segment at 169 to 193 (KFCASKEYRKTFRHGSQFATHEIIH) adopts a C2H2-type 1; degenerate zinc-finger fold. 7 C2H2-type zinc fingers span residues 199–221 (YECK…QKIH), 227–249 (FECK…HRIH), 255–277 (YECK…QRIH), 283–305 (YECK…QRIH), 311–333 (YECK…QRIH), 339–361 (YECK…QRIH), and 367–389 (YECK…HRIH). Residues K314 and K328 each participate in a glycyl lysine isopeptide (Lys-Gly) (interchain with G-Cter in SUMO2) cross-link.

This sequence belongs to the krueppel C2H2-type zinc-finger protein family.

Its subcellular location is the nucleus. Functionally, may be involved in transcriptional regulation. This chain is Zinc finger protein 566 (ZNF566), found in Pan troglodytes (Chimpanzee).